Reading from the N-terminus, the 368-residue chain is Cyclic GMP-AMP synthase-like receptor (368 aa).

ATP contacts are provided by residues Ser60 and 72–74; that span reads EYD. Mg(2+) contacts are provided by Glu72, Asp74, and Asp190. Residues Asp190 and 229–236 contribute to the GTP site; that span reads RASFYRQE. Residues 233-236, Lys254, and 268-272 contribute to the ATP site; these read YRQE and SYFIK.

It belongs to the mab-21 family. The cofactor is Mg(2+). Mn(2+) is required as a cofactor.

The catalysed reaction is GTP + ATP = 3',2'-cGAMP + 2 diphosphate. It carries out the reaction GTP + ATP = pppA(2'-5')pG + diphosphate. It catalyses the reaction pppA(2'-5')pG = 3',2'-cGAMP + diphosphate. Its activity is regulated as follows. The enzyme activity is specifically activated by double-stranded RNA (dsRNA). Nucleotidyltransferase that catalyzes the formation of cyclic GMP-AMP (3',2'-cGAMP) from ATP and GTP and plays a key role in innate immunity. Synthesizes 3',2'-cGAMP in a two-step reaction through production of the linear intermediate pppA(2'-5')pG. Acts as a key sensor of double-stranded RNA (dsRNA), the presence of dsRNA in the cytoplasm being a danger signal that triggers the immune responses. Directly binds dsRNA, activating the nucleotidyltransferase activity, leading to synthesis of 3',2'-cGAMP, a second messenger that binds to and activates Sting, thereby triggering the antiviral immune response via activation of the NF-kappa-B transcription factor Rel (Relish). In Lucilia cuprina (Green bottle fly), this protein is Cyclic GMP-AMP synthase-like receptor.